Here is a 544-residue protein sequence, read N- to C-terminus: MAKEIKFDMNARDLLKKGVDELANAVKVTLGPKGRNVILEKKFGAPQITKDGVTVAKEIELACPYENMGAQLVKEVASKTNDKAGDGTTTATVLAQAIIGVGLKNVTAGANPMDLKRGIDKAVSKVVESIASQSEAVGTNMDRIEHVAKISANGDEGIGKLIAEAMQKVKKEGVITVEEAKGTETTVEVVEGMQFDRGYISAYFVTDTEKMETQFENPYILIYDKKISVLKDLLPILEQMVQSGRALLIIAEDIDSEALATLVVNRLRGGLKVCAVKAPGFGDRRKAMLEDIAILTGGTVITEEKGMKLEDAKMDMLGSADKVTVNKDNTTIVKGNGDKAAIESRIGQIKAQIETTTSDYDKEKLQERLAKLAGGVAVLYVGAPSEVEMKEKKDRVDDALHATRAAIEEGTVPGGGVAYLRAIPALEGLKGENEDETTGIEIVKRAIEEPLRQIVNNAGKEGAVVVQKVKEGTGAFGYNARTDVYEDLSEAGVVDPAKVTRIALENAASIAGMFLTTECVVADKKEEAPAPPMNPGMGGMGGMM.

Residues 29-32, Lys-50, 86-90, Gly-415, and Asp-495 each bind ATP; these read TLGP and DGTTT.

Belongs to the chaperonin (HSP60) family. As to quaternary structure, forms a cylinder of 14 subunits composed of two heptameric rings stacked back-to-back. Interacts with the co-chaperonin GroES.

It is found in the cytoplasm. It carries out the reaction ATP + H2O + a folded polypeptide = ADP + phosphate + an unfolded polypeptide.. In terms of biological role, together with its co-chaperonin GroES, plays an essential role in assisting protein folding. The GroEL-GroES system forms a nano-cage that allows encapsulation of the non-native substrate proteins and provides a physical environment optimized to promote and accelerate protein folding. This chain is Chaperonin GroEL, found in Tannerella forsythia (Bacteroides forsythus).